A 477-amino-acid polypeptide reads, in one-letter code: MKAICDRFVPSKCSSSSTSEKRDISSPTSLVSDSASSDNKSNLTLCSDVVASSSPVSQLCREASTSGHNPVCTTHSSWTVILKTASMASGAIRRFQDRVLGPSRTGISSSTSEIWLLGVCYKISEGESSEEADAGRVLAAFRQDFSSLILMTYRRGFEPIGDTTYTSDVNWGCMLRSGQMLFAQALLFQRLGRSWRKKDSEPADEKYLEILELFGDTEASAFSIHNLILAGESYGLAAGSWVGPYAVCRSWESLARKNKEETDDKHKSFSMAVHIVSGSEDGERGGAPILCIEDVTKTCLEFSEGETEWPPILLLVPLVLGLDRVNPRYIPSLIATFTFPQSLGILGGKPGASTYIVGVQEDKGFYLDPHDVQQVVTVKKENQDVDTSSYHCNTLRYVPLESLDPSLALGFYCQHKDDFDDFCIRATKLAGDSNGAPLFTVTQSHRRNDCGIAETSSSTETSTEISGEEHEDDWQLL.

The tract at residues 11–39 is disordered; sequence SKCSSSSTSEKRDISSPTSLVSDSASSDN. Residues 25–39 show a composition bias toward polar residues; sequence SSPTSLVSDSASSDN. The active-site Nucleophile is C173. Catalysis depends on residues D368 and H370. The tract at residues 453 to 477 is disordered; that stretch reads AETSSSTETSTEISGEEHEDDWQLL. The segment covering 454-465 has biased composition (low complexity); sequence ETSSSTETSTEI.

Belongs to the peptidase C54 family. As to quaternary structure, interacts with ATG8a and ATG8d. In terms of tissue distribution, constitutively expressed.

The protein localises to the cytoplasm. The catalysed reaction is [protein]-C-terminal L-amino acid-glycyl-phosphatidylethanolamide + H2O = [protein]-C-terminal L-amino acid-glycine + a 1,2-diacyl-sn-glycero-3-phosphoethanolamine. Cysteine protease that plays a key role in autophagy by mediating both proteolytic activation and delipidation of ATG8 family proteins. The protease activity is required for proteolytic activation of ATG8 family proteins: cleaves the C-terminal amino acid of ATG8 proteins to reveal a C-terminal glycine. Exposure of the glycine at the C-terminus is essential for ATG8 proteins conjugation to phosphatidylethanolamine (PE) and insertion to membranes, which is necessary for autophagy. In addition to the protease activity, also mediates delipidation of PE-conjugated ATG8 proteins. This is Cysteine protease ATG4b from Arabidopsis thaliana (Mouse-ear cress).